A 338-amino-acid chain; its full sequence is Ketol-acid reductoisomerase (NADP(+)) (338 aa).

The 181-residue stretch at 1 to 181 (MKIYYDKDCN…GGGRAGIIET (181 aa)) folds into the KARI N-terminal Rossmann domain. Residues 24–27 (YGSQ), lysine 47, serine 50, serine 52, and 82–85 (DEIQ) each bind NADP(+). Histidine 107 is an active-site residue. Residue glycine 133 participates in NADP(+) binding. Residues 182–327 (SFKEETETDL…ARLRSMMSWI (146 aa)) enclose the KARI C-terminal knotted domain. 4 residues coordinate Mg(2+): aspartate 190, glutamate 194, glutamate 226, and glutamate 230. Serine 251 lines the substrate pocket.

Belongs to the ketol-acid reductoisomerase family. It depends on Mg(2+) as a cofactor.

The catalysed reaction is (2R)-2,3-dihydroxy-3-methylbutanoate + NADP(+) = (2S)-2-acetolactate + NADPH + H(+). The enzyme catalyses (2R,3R)-2,3-dihydroxy-3-methylpentanoate + NADP(+) = (S)-2-ethyl-2-hydroxy-3-oxobutanoate + NADPH + H(+). The protein operates within amino-acid biosynthesis; L-isoleucine biosynthesis; L-isoleucine from 2-oxobutanoate: step 2/4. It participates in amino-acid biosynthesis; L-valine biosynthesis; L-valine from pyruvate: step 2/4. Its function is as follows. Involved in the biosynthesis of branched-chain amino acids (BCAA). Catalyzes an alkyl-migration followed by a ketol-acid reduction of (S)-2-acetolactate (S2AL) to yield (R)-2,3-dihydroxy-isovalerate. In the isomerase reaction, S2AL is rearranged via a Mg-dependent methyl migration to produce 3-hydroxy-3-methyl-2-ketobutyrate (HMKB). In the reductase reaction, this 2-ketoacid undergoes a metal-dependent reduction by NADPH to yield (R)-2,3-dihydroxy-isovalerate. The chain is Ketol-acid reductoisomerase (NADP(+)) from Geobacter sulfurreducens (strain ATCC 51573 / DSM 12127 / PCA).